A 586-amino-acid chain; its full sequence is Laccase-9 (586 aa).

An N-terminal signal peptide occupies residues 1 to 25 (MPRVHHSLSNQAFLVLLLFSSIASA). Plastocyanin-like domains lie at 33-149 (HVKD…PRSG) and 159-307 (KEVP…YEGA). Asn-52, Asn-74, and Asn-79 each carry an N-linked (GlcNAc...) asparagine glycan. His-83 and His-85 together coordinate Cu cation. Residue Asn-111 is glycosylated (N-linked (GlcNAc...) asparagine). His-128 and His-130 together coordinate Cu cation. N-linked (GlcNAc...) asparagine glycosylation is found at Asn-236, Asn-333, Asn-385, Asn-403, and Asn-451. Residues 411–552 (DFPDQPPLKF…MMAFIVQNGP (142 aa)) form the Plastocyanin-like 3 domain. His-469, His-472, His-474, His-531, Cys-532, His-533, and His-537 together coordinate Cu cation.

The protein belongs to the multicopper oxidase family. Cu cation serves as cofactor. Predominantly expressed in roots.

It is found in the secreted. It localises to the extracellular space. The protein localises to the apoplast. The catalysed reaction is 4 hydroquinone + O2 = 4 benzosemiquinone + 2 H2O. Functionally, lignin degradation and detoxification of lignin-derived products. In Arabidopsis thaliana (Mouse-ear cress), this protein is Laccase-9 (LAC9).